A 160-amino-acid polypeptide reads, in one-letter code: Cytochrome b6-f complex subunit 4 (160 aa).

3 helical membrane passes run leucine 36–valine 56, leucine 95–glutamate 115, and threonine 131–isoleucine 151.

This sequence belongs to the cytochrome b family. PetD subfamily. In terms of assembly, the 4 large subunits of the cytochrome b6-f complex are cytochrome b6, subunit IV (17 kDa polypeptide, petD), cytochrome f and the Rieske protein, while the 4 small subunits are petG, petL, petM and petN. The complex functions as a dimer.

Its subcellular location is the plastid. It localises to the chloroplast thylakoid membrane. In terms of biological role, component of the cytochrome b6-f complex, which mediates electron transfer between photosystem II (PSII) and photosystem I (PSI), cyclic electron flow around PSI, and state transitions. In Anthoceros angustus (Hornwort), this protein is Cytochrome b6-f complex subunit 4.